A 185-amino-acid chain; its full sequence is Elongation factor P (185 aa).

It belongs to the elongation factor P family.

Its subcellular location is the cytoplasm. The protein operates within protein biosynthesis; polypeptide chain elongation. Its function is as follows. Involved in peptide bond synthesis. Stimulates efficient translation and peptide-bond synthesis on native or reconstituted 70S ribosomes in vitro. Probably functions indirectly by altering the affinity of the ribosome for aminoacyl-tRNA, thus increasing their reactivity as acceptors for peptidyl transferase. This Bacillus cereus (strain B4264) protein is Elongation factor P.